We begin with the raw amino-acid sequence, 200 residues long: Holliday junction branch migration complex subunit RuvA (200 aa).

The domain I stretch occupies residues Met1 to Ala64. The interval Glu65–Ala143 is domain II. Positions Met144–Ala154 are flexible linker. Residues Ala154–Gly200 are domain III.

The protein belongs to the RuvA family. In terms of assembly, homotetramer. Forms an RuvA(8)-RuvB(12)-Holliday junction (HJ) complex. HJ DNA is sandwiched between 2 RuvA tetramers; dsDNA enters through RuvA and exits via RuvB. An RuvB hexamer assembles on each DNA strand where it exits the tetramer. Each RuvB hexamer is contacted by two RuvA subunits (via domain III) on 2 adjacent RuvB subunits; this complex drives branch migration. In the full resolvosome a probable DNA-RuvA(4)-RuvB(12)-RuvC(2) complex forms which resolves the HJ.

The protein localises to the cytoplasm. In terms of biological role, the RuvA-RuvB-RuvC complex processes Holliday junction (HJ) DNA during genetic recombination and DNA repair, while the RuvA-RuvB complex plays an important role in the rescue of blocked DNA replication forks via replication fork reversal (RFR). RuvA specifically binds to HJ cruciform DNA, conferring on it an open structure. The RuvB hexamer acts as an ATP-dependent pump, pulling dsDNA into and through the RuvAB complex. HJ branch migration allows RuvC to scan DNA until it finds its consensus sequence, where it cleaves and resolves the cruciform DNA. The protein is Holliday junction branch migration complex subunit RuvA of Erythrobacter litoralis (strain HTCC2594).